The chain runs to 306 residues: Cathepsin Z (306 aa).

An N-terminal signal peptide occupies residues 1-20 (MLAILFNFFLLTYFTNITLG). Positions 21 to 65 (KVGKSIDLDTRNGYNVHGCYKQTGKIYAHKTYPRQYEAENYNFDD) are cleaved as a propeptide — activation peptide. 5 cysteine pairs are disulfide-bonded: Cys-39–Cys-96, Cys-93–Cys-136, Cys-130–Cys-168, Cys-158–Cys-174, and Cys-177–Cys-182. Cys-96 is a catalytic residue. The N-linked (GlcNAc...) asparagine glycan is linked to Asn-187. Cys-217 and Cys-299 are joined by a disulfide. Active-site residues include His-243 and Asn-265. Asn-286 carries an N-linked (GlcNAc...) asparagine glycan.

Belongs to the peptidase C1 family.

Its subcellular location is the cytoplasmic vesicle. It is found in the secretory vesicle. It localises to the secreted. It carries out the reaction Release of C-terminal amino acid residues with broad specificity, but lacks action on C-terminal proline. Shows weak endopeptidase activity.. Its activity is regulated as follows. The disulfide bridge formed between Cys-39 in the propeptide and the active site residue Cys-96 may prevent activation of the zymogen through formation of a reversible covalent bond with the active site residue. Its function is as follows. Exhibits carboxy-monopeptidase as well as carboxy-dipeptidase activity. Plays an essential role in molting, a process during larval stages in which a new cuticle is formed and the old cuticle is shed. Required for the degradation and shedding of the old cuticle. The polypeptide is Cathepsin Z (Onchocerca volvulus).